Consider the following 128-residue polypeptide: Protein Wnt-10 (128 aa).

Intrachain disulfides connect C3–C17, C5–C12, C74–C105, C90–C100, and C127–C128. S9 carries O-palmitoleoyl serine; by PORCN lipidation. N91 carries N-linked (GlcNAc...) asparagine glycosylation.

This sequence belongs to the Wnt family. Palmitoleoylation is required for efficient binding to frizzled receptors. Depalmitoleoylation leads to Wnt signaling pathway inhibition. As to expression, in embryo, in dorsal hindbrain; in adults, in brain.

The protein resides in the secreted. It localises to the extracellular space. It is found in the extracellular matrix. Functionally, ligand for members of the frizzled family of seven transmembrane receptors. Probable developmental protein. May be a signaling molecule which affects the development of discrete regions of tissues. Is likely to signal over only few cell diameters. This chain is Protein Wnt-10 (wnt10), found in Xenopus laevis (African clawed frog).